The sequence spans 310 residues: MDVAAMARCVGRCYVSPAFGESESHRLSERRFLKLSSSTNSDPAGSKSLKLRGKIHRRMSYFRPIMAKDESISSRSGETKQINGKQKNIVWHDCPVTKSDRQELIKQKGCVIWITGLSGSGKSSLACALSRALHNRGKLSYILDGDNVRHGLNSDLSFEADDRAENIRRVGEVAKLFADSGIICIASLISPYRIERAACRALLPQGDFIEVFMDVPLHVCEARDPKGLYKRARAGKIKGFTGVDDPYEAPLDCEIVIQNSRDKGLSSSSSSSSSPSSSSSSLCEMADIVVSYLDQNGYLKKHSTKSRNCM.

The transit peptide at M1–R75 directs the protein to the chloroplast. G116 to S124 provides a ligand contact to ATP. Substrate contacts are provided by residues D146, R149, R163, N166, I189–S190, and G239. The active-site Phosphoserine intermediate is S190.

It belongs to the APS kinase family. In terms of assembly, homodimer; disulfide-linked. As to expression, expressed in root vasculature, root tips, leaf epidermal and guard cells, pollen grains and radicle of immature seeds.

The protein localises to the plastid. The protein resides in the chloroplast. It carries out the reaction adenosine 5'-phosphosulfate + ATP = 3'-phosphoadenylyl sulfate + ADP + H(+). It participates in sulfur metabolism; hydrogen sulfide biosynthesis; sulfite from sulfate: step 2/3. Catalyzes the phosphorylation of adenosine 5'-phosphosulfate to 3'-phosphoadenylyl sulfate, which is the activated sulfate form for sulfation reactions. Essential for plant reproduction and viability. The protein is Adenylyl-sulfate kinase 4, chloroplastic (APK4) of Arabidopsis thaliana (Mouse-ear cress).